Consider the following 269-residue polypeptide: Holocytochrome-c synthase (269 aa).

Residues 1-72 (MGWFWADQKT…ASKQPGQKMD (72 aa)) are disordered. HRM repeat units lie at residues 25–30 (GCPVMH) and 41–46 (ECPVMQ).

The protein belongs to the cytochrome c-type heme lyase family.

The protein resides in the mitochondrion inner membrane. The protein localises to the mitochondrion intermembrane space. The enzyme catalyses holo-[cytochrome c] = apo-[cytochrome c] + heme b. Functionally, lyase that catalyzes the covalent linking of the heme group to the cytochrome C apoprotein to produce the mature functional cytochrome. The protein is Holocytochrome-c synthase (CYC3) of Saccharomyces cerevisiae (strain ATCC 204508 / S288c) (Baker's yeast).